A 146-amino-acid chain; its full sequence is Large ribosomal subunit protein uL15 (146 aa).

The disordered stretch occupies residues 1–62 (MRLHELRPKT…GQMPLQERLP (62 aa)). The span at 10-21 (TNYKKSRKRKGR) shows a compositional bias: basic residues. A compositionally biased stretch (gly residues) spans 42-52 (TGGGVRPGFEG).

It belongs to the universal ribosomal protein uL15 family. In terms of assembly, part of the 50S ribosomal subunit.

Binds to the 23S rRNA. This chain is Large ribosomal subunit protein uL15, found in Natranaerobius thermophilus (strain ATCC BAA-1301 / DSM 18059 / JW/NM-WN-LF).